The chain runs to 104 residues: Protein METHYLENE BLUE SENSITIVITY 2 (104 aa).

Residues 1 to 11 are compositionally biased toward basic residues; it reads MTGKAKPKKHT. 2 disordered regions span residues 1–46 and 64–104; these read MTGK…GHAK and IHHE…SLKK. 2 stretches are compositionally biased toward basic and acidic residues: residues 36 to 46 and 73 to 82; these read RTGKEKGGHAK and LTYEEPRNLH.

The protein resides in the nucleus. The protein localises to the cytoplasm. It localises to the stress granule. Functionally, required for acclimation to reactive oxygen species (ROS) responses downstream of beta-cyclocitral, including singlet oxygen 1O(2) detoxification reactions, especially upon light-mediated photooxidative stress, and leading to programmed cell death. Prevents leaf senescence. The protein is Protein METHYLENE BLUE SENSITIVITY 2 of Arabidopsis thaliana (Mouse-ear cress).